The following is a 101-amino-acid chain: Acylphosphatase-1 (101 aa).

The residue at position 2 (serine 2) is an N-acetylserine. Serine 2 is modified (N-acetylalanine). The Acylphosphatase-like domain maps to 11-101; that stretch reads SVDYEIFGKV…LDYTDFQIVK (91 aa). Residues arginine 26 and asparagine 44 contribute to the active site.

The protein belongs to the acylphosphatase family. As to expression, organ-common type isozyme is found in many different tissues.

It catalyses the reaction an acyl phosphate + H2O = a carboxylate + phosphate + H(+). The protein is Acylphosphatase-1 (ACYP1) of Bos taurus (Bovine).